A 777-amino-acid chain; its full sequence is MTATSPAPFSPQEIAAEGIKPEEYAEIVRRLGRHPNKAELGMFGVMWSEHCCYKNSRPLLKQFPTTGPRILVGPGENAGVVDLGEGLQLAFKIESHNHPSAVEPFQGAATGVGGILRDIFTMGARPIALLNSLRFGSLEDPKTQRLFSGVVAGISHYGNCVGVPTVGGEVYFDPAYSGNPLVNVMALGLMETPEIVKSGASGIGNPVLYVGSTTGRDGMGGASFASAELSDESIDDRPAVQVGDPFLEKSLIEACLEAFKTGAVVAAQDMGAAGITCSTSEMAAKGGVGIELDLDKIPVRETGMIPYEYLLSESQERMLFVAHKGREQELIDIFHRWGLQAVVAGTVIAEPIVRILFQGAIAAEIPADALAENTPLYERELLAEPPEYARQAWEWSSDSLPTCTTAGIEIQGNLQSWQEILLTLLNTPTIASKNWVYRQYDHQVQNNTVFLPGGADAAVVRLRPLEGQGKITNTLSGVAATVDCNPRYVYLDPYEGAKAVVAEAARNLSCVGAEPLAVTDNLNFGSPEKPIGYWQLSEACRGLAEGCRELATPVTGGNVSLYNETLDPQGNPQPIYPTPVVGMVGLITDLTKICGQGWQTPGDVIYLLGASITTLGASEYLATIHDTVAGRPPRVDFDLERRVQKVCREGIYADWVRSAHDCAEGGLVVALAESCLAGNLGAEIHLDASGSQLQRLDEVLFGEGGARILVSVASTQQENWESYLQEHLGQNWQKLGIVGNTDADLAVLTTDNQSLIRVSIEEMNDRYQNAIARRLAL.

Residue histidine 50 is part of the active site. Residues tyrosine 53 and lysine 92 each contribute to the ATP site. Glutamate 94 is a binding site for Mg(2+). Substrate is bound by residues 95-98 (SHNH) and arginine 117. Histidine 96 (proton acceptor) is an active-site residue. Aspartate 118 is a binding site for Mg(2+). Glutamine 241 provides a ligand contact to substrate. Mg(2+) is bound at residue aspartate 269. 313–315 (ESQ) serves as a coordination point for substrate. Residues aspartate 520 and glycine 557 each coordinate ATP. Asparagine 558 is a binding site for Mg(2+). Serine 560 serves as a coordination point for substrate.

Belongs to the FGAMS family. In terms of assembly, monomer. Part of the FGAM synthase complex composed of 1 PurL, 1 PurQ and 2 PurS subunits.

The protein localises to the cytoplasm. The enzyme catalyses N(2)-formyl-N(1)-(5-phospho-beta-D-ribosyl)glycinamide + L-glutamine + ATP + H2O = 2-formamido-N(1)-(5-O-phospho-beta-D-ribosyl)acetamidine + L-glutamate + ADP + phosphate + H(+). It functions in the pathway purine metabolism; IMP biosynthesis via de novo pathway; 5-amino-1-(5-phospho-D-ribosyl)imidazole from N(2)-formyl-N(1)-(5-phospho-D-ribosyl)glycinamide: step 1/2. Part of the phosphoribosylformylglycinamidine synthase complex involved in the purines biosynthetic pathway. Catalyzes the ATP-dependent conversion of formylglycinamide ribonucleotide (FGAR) and glutamine to yield formylglycinamidine ribonucleotide (FGAM) and glutamate. The FGAM synthase complex is composed of three subunits. PurQ produces an ammonia molecule by converting glutamine to glutamate. PurL transfers the ammonia molecule to FGAR to form FGAM in an ATP-dependent manner. PurS interacts with PurQ and PurL and is thought to assist in the transfer of the ammonia molecule from PurQ to PurL. The protein is Phosphoribosylformylglycinamidine synthase subunit PurL of Trichormus variabilis (strain ATCC 29413 / PCC 7937) (Anabaena variabilis).